Here is a 1037-residue protein sequence, read N- to C-terminus: Tyrosine-protein kinase-like otk (1037 aa).

A signal peptide spans 1 to 22 (MAALRISVWILVQALMMALVSS). Asparagine 23 and asparagine 39 each carry an N-linked (GlcNAc...) asparagine glycan. Residues 23-582 (NSSHFLQLPQ…GGDGFLVTRA (560 aa)) lie on the Extracellular side of the membrane. 5 consecutive Ig-like C2-type domains span residues 25-115 (SHFL…AKLS), 114-200 (LSVI…RVMS), 252-366 (PEDL…APIN), 369-464 (PGTL…VAIN), and 469-559 (PKFS…VQLV). 4 disulfides stabilise this stretch: cysteine 46–cysteine 96, cysteine 138–cysteine 189, cysteine 277–cysteine 355, and cysteine 400–cysteine 448. 7 N-linked (GlcNAc...) asparagine glycosylation sites follow: asparagine 337, asparagine 418, asparagine 430, asparagine 445, asparagine 458, asparagine 513, and asparagine 525. A disulfide bridge connects residues cysteine 491 and cysteine 543. Residues 583-603 (VLITMTVALAYIVLVVGLMLW) traverse the membrane as a helical segment. Residues 604–1037 (CRYRRQARKA…LSKAMQSLEK (434 aa)) are Cytoplasmic-facing. Disordered stretches follow at residues 618–681 (LSTK…KKSA) and 719–764 (ATGS…KTSM). The span at 653 to 675 (QSRSKSNGDAQKSDDTACSQQSR) shows a compositional bias: polar residues. Residue serine 680 is modified to Phosphoserine. One can recognise a Protein kinase; inactive domain in the interval 694–1035 (LTELIQIGRG…AALSKAMQSL (342 aa)). Basic and acidic residues predominate over residues 724–735 (SDKDADTEKQHS).

This sequence belongs to the protein kinase superfamily. Tyr protein kinase family. Insulin receptor subfamily. As to quaternary structure, interacts with plexA; component of a receptor complex that mediates the repulsive signaling in response to Semaphorin ligands.

The protein localises to the cell membrane. In terms of biological role, acts as a calcium-dependent, homophilic cell adhesion molecule that regulates neural recognition during the development of the nervous system. Component of the repulsive Plexin signaling response to regulate motor axon guidance at the embryonic stage. Also component of a receptor complex that is required in the adult visual system to innervate the lamina layer; specific targeting of R1-R6 axons. The sequence is that of Tyrosine-protein kinase-like otk from Drosophila ananassae (Fruit fly).